A 260-amino-acid chain; its full sequence is O-antigen export system permease protein RfbA (260 aa).

7 helical membrane-spanning segments follow: residues 31 to 51, 63 to 83, 109 to 129, 139 to 159, 173 to 193, 201 to 221, and 229 to 249; these read FLGF…YVLL, FPFF…SVGG, VVVT…VLGM, VVLF…LTYI, IVSN…PLST, SLML…AIFY, and EPLM…SSIF. Residues 32-252 enclose the ABC transmembrane type-2 domain; sequence LGFLWTFLNP…WAASSIFESR (221 aa).

Belongs to the ABC-2 integral membrane protein family.

Its subcellular location is the cell inner membrane. May form an ATP-driven O-antigen export apparatus, in association with RfbB. The polypeptide is O-antigen export system permease protein RfbA (rfbA) (Myxococcus xanthus).